The sequence spans 512 residues: Threonine synthase (512 aa).

An N6-(pyridoxal phosphate)lysine modification is found at Lys121. Gly273, Asn274, Phe275, Asp277, and Thr445 together coordinate pyridoxal 5'-phosphate.

Belongs to the threonine synthase family. Pyridoxal 5'-phosphate is required as a cofactor.

It carries out the reaction O-phospho-L-homoserine + H2O = L-threonine + phosphate. It participates in amino-acid biosynthesis; L-threonine biosynthesis; L-threonine from L-aspartate: step 5/5. Catalyzes the gamma-elimination of phosphate from L-phosphohomoserine and the beta-addition of water to produce L-threonine. The polypeptide is Threonine synthase (THR4) (Eremothecium gossypii (strain ATCC 10895 / CBS 109.51 / FGSC 9923 / NRRL Y-1056) (Yeast)).